The sequence spans 53 residues: Conotoxin Cal9.2f (53 aa).

Positions 1–6 (KKGVTL) are excised as a propeptide. 3 cysteine pairs are disulfide-bonded: Cys15/Cys32, Cys20/Cys42, and Cys22/Cys47.

Expressed by the venom duct.

It localises to the secreted. Functionally, probable neurotoxin with unknown target. Possibly targets ion channels. The sequence is that of Conotoxin Cal9.2f from Californiconus californicus (California cone).